The following is a 510-amino-acid chain: 2,3-bisphosphoglycerate-independent phosphoglycerate mutase (510 aa).

Mn(2+)-binding residues include aspartate 12 and serine 62. Serine 62 acts as the Phosphoserine intermediate in catalysis. Residues histidine 123, 152–153, arginine 184, arginine 190, 257–260, and lysine 331 contribute to the substrate site; these read RD and RADR. Mn(2+)-binding residues include aspartate 399, histidine 403, aspartate 440, histidine 441, and histidine 458.

Belongs to the BPG-independent phosphoglycerate mutase family. Monomer. It depends on Mn(2+) as a cofactor.

The enzyme catalyses (2R)-2-phosphoglycerate = (2R)-3-phosphoglycerate. Its pathway is carbohydrate degradation; glycolysis; pyruvate from D-glyceraldehyde 3-phosphate: step 3/5. In terms of biological role, catalyzes the interconversion of 2-phosphoglycerate and 3-phosphoglycerate. This is 2,3-bisphosphoglycerate-independent phosphoglycerate mutase from Lawsonia intracellularis (strain PHE/MN1-00).